The primary structure comprises 226 residues: Lipoprotein-releasing system ATP-binding protein LolD 1 (226 aa).

An ABC transporter domain is found at 6 to 226; sequence LRLDKVTRSF…TLREGKVVAA (221 aa). Position 42-49 (42-49) interacts with ATP; sequence GPSGAGKS.

This sequence belongs to the ABC transporter superfamily. Lipoprotein translocase (TC 3.A.1.125) family. In terms of assembly, the complex is composed of two ATP-binding proteins (LolD) and two transmembrane proteins (LolC and LolE).

It is found in the cell inner membrane. Part of the ABC transporter complex LolCDE involved in the translocation of mature outer membrane-directed lipoproteins, from the inner membrane to the periplasmic chaperone, LolA. Responsible for the formation of the LolA-lipoprotein complex in an ATP-dependent manner. This Rhodospirillum rubrum (strain ATCC 11170 / ATH 1.1.1 / DSM 467 / LMG 4362 / NCIMB 8255 / S1) protein is Lipoprotein-releasing system ATP-binding protein LolD 1.